Reading from the N-terminus, the 355-residue chain is NADH dehydrogenase [ubiquinone] 1 alpha subcomplex subunit 10, mitochondrial (355 aa).

Residues 1–35 (MALRLLKLAATSASARVVAAGAQRVRGIHSSVQCK) constitute a mitochondrion transit peptide. Residue serine 250 is modified to Phosphoserine; by PINK1. Lysine 285 bears the N6-succinyllysine mark.

The protein belongs to the complex I NDUFA10 subunit family. As to quaternary structure, complex I is composed of 45 different subunits. This a component of the hydrophobic protein fraction. The cofactor is FAD. Phosphorylation at Ser-250 by PINK1 is required for the binding and/or reduction of the complex I substrate ubiquinone.

The protein resides in the mitochondrion matrix. Its function is as follows. Accessory subunit of the mitochondrial membrane respiratory chain NADH dehydrogenase (Complex I), that is believed not to be involved in catalysis. Complex I functions in the transfer of electrons from NADH to the respiratory chain. The immediate electron acceptor for the enzyme is believed to be ubiquinone. This is NADH dehydrogenase [ubiquinone] 1 alpha subcomplex subunit 10, mitochondrial (NDUFA10) from Homo sapiens (Human).